Reading from the N-terminus, the 393-residue chain is Arginine biosynthesis bifunctional protein ArgJ 3 (393 aa).

Residues threonine 148, lysine 170, threonine 181, glutamate 260, asparagine 388, and threonine 393 each coordinate substrate. Threonine 181 (nucleophile) is an active-site residue.

It belongs to the ArgJ family. As to quaternary structure, heterotetramer of two alpha and two beta chains.

The protein resides in the cytoplasm. The enzyme catalyses N(2)-acetyl-L-ornithine + L-glutamate = N-acetyl-L-glutamate + L-ornithine. It catalyses the reaction L-glutamate + acetyl-CoA = N-acetyl-L-glutamate + CoA + H(+). It functions in the pathway amino-acid biosynthesis; L-arginine biosynthesis; L-ornithine and N-acetyl-L-glutamate from L-glutamate and N(2)-acetyl-L-ornithine (cyclic): step 1/1. It participates in amino-acid biosynthesis; L-arginine biosynthesis; N(2)-acetyl-L-ornithine from L-glutamate: step 1/4. Its function is as follows. Catalyzes two activities which are involved in the cyclic version of arginine biosynthesis: the synthesis of N-acetylglutamate from glutamate and acetyl-CoA as the acetyl donor, and of ornithine by transacetylation between N(2)-acetylornithine and glutamate. This is Arginine biosynthesis bifunctional protein ArgJ 3 from Streptomyces clavuligerus.